Consider the following 2439-residue polypeptide: Mucin-6 (2439 aa).

Positions 1 to 22 (MVQRWLLLSCCGALLSAGLANT) are cleaved as a signal peptide. Positions 43 to 214 (GQCSTWGAGH…KLDDPGEICT (172 aa)) constitute a VWFD 1 domain. Intrachain disulfides connect Cys-45–Cys-176 and Cys-67–Cys-213. Residue Asn-268 is glycosylated (N-linked (GlcNAc...) asparagine). The 56-residue stretch at 302 to 357 (CPANQVYQECGSACVKTCSNPQHSCSSSCTFGCFCPEGTVLNDLSNNHTCVPVTQC) folds into the TIL domain. A VWFD 2 domain is found at 395 to 579 (GHCSLEGGSF…ALERETDPCS (185 aa)). 2 disulfide bridges follow: Cys-397-Cys-533 and Cys-419-Cys-578. Residues Asn-486 and Asn-659 are each glycosylated (N-linked (GlcNAc...) asparagine). Residues 866-1038 (STCTLYGEGH…NSWKESPLCG (173 aa)) form the VWFD 3 domain. Disulfide bonds link Cys-868–Cys-1002, Cys-890–Cys-1037, Cys-899–Cys-999, and Cys-917–Cys-924. Residues Asn-975 and Asn-1179 are each glycosylated (N-linked (GlcNAc...) asparagine). Disordered regions lie at residues 1202 to 1455 (PQPP…TSLV), 1471 to 1626 (ATSA…LVTP), 1642 to 1834 (SASI…HPHT), 1868 to 1983 (SIHS…STGP), 2033 to 2077 (ATSA…THSS), 2090 to 2196 (SSSW…SASP), 2233 to 2278 (VSPT…SLTT), and 2323 to 2348 (LTAH…SPGV). Positions 1224 to 1265 (TGTSTTIGLLSSTGPSPSSNHTPASPTQTPLLPATLTSSKPT) are enriched in low complexity. Residues 1276-1286 (TAVTPQATSGL) show a composition bias toward polar residues. Residues 1294–1339 (STATKPTVTQATTRATASTASPATTSTAQSTTRTTMTLPTPATSGT) show a composition bias toward low complexity. The span at 1340-1351 (SPTLPKSTNQEL) shows a compositional bias: polar residues. Low complexity-rich tracts occupy residues 1352 to 1373 (PGTT…TGPT) and 1381 to 1415 (TRPT…AGSP). 3 stretches are compositionally biased toward polar residues: residues 1416 to 1455 (VPST…TSLV), 1471 to 1481 (ATSASNHSAPT), and 1490 to 1520 (LKAT…STNK). Composition is skewed to low complexity over residues 1521–1567 (TPTS…ATSS) and 1574–1611 (TTHS…PQTT). The 1; truncated repeat unit spans residues 1561–1738 (TNSATSSRPP…TTSGTSQSRS (178 aa)). The interval 1607 to 1953 (HPQTTLPTHV…STGTRTPVAH (347 aa)) is approximate repeats. Residues 1659–1686 (LKATGSTHTAPTMTLTTSGTSQALSSLN) are compositionally biased toward polar residues. The segment covering 1687–1768 (TAKTSTSLHS…PEVTSTSTTS (82 aa)) has biased composition (low complexity). Over residues 1769 to 1793 (ITPNHTSTGTRTPVAHTTSATSSRL) the composition is skewed to polar residues. Residues 1785-1953 (TTSATSSRLP…STGTRTPVAH (169 aa)) form repeat 2. Composition is skewed to low complexity over residues 1794 to 1834 (PTPF…HPHT) and 1891 to 1917 (TAPP…TSTS). The segment covering 1918–1962 (LPYHTSSTHHPEVTPTSTTNITPKHTSTGTRTPVAHTTSASSSRL) has biased composition (polar residues). Residues 1963-1983 (PTPFTTHSPPTGSSPFSSTGP) are compositionally biased toward low complexity. Polar residues predominate over residues 2052–2070 (LKATGSTHTAPPMTVTTSG). A compositionally biased stretch (low complexity) spans 2090 to 2102 (SSSWLPQNSSSRP). Polar residues predominate over residues 2107–2120 (ITTQLPHLSSATTP). The segment covering 2121 to 2196 (VSTTNQLSSS…PTTASVSASP (76 aa)) has biased composition (low complexity). Residues 2240-2264 (HLASSTIAFPSTPRTTASTHTAPAF) are compositionally biased toward polar residues. Over residues 2265–2278 (SSQSTTSRSTSLTT) the composition is skewed to low complexity. A compositionally biased stretch (polar residues) spans 2323 to 2347 (LTAHGSTPASAPVSSLGTPTPTSPG). Cystine bridges form between Cys-2349–Cys-2396, Cys-2363–Cys-2410, Cys-2372–Cys-2430, and Cys-2376–Cys-2432. Residues 2349 to 2438 (CSVREQQEEI…HCVCSSVACG (90 aa)) enclose the CTCK domain.

In terms of assembly, multimer; disulfide-linked. In terms of processing, O-glycosylated. Expressed in the regenerative zone of gastric antrum, gastric body mucosa and gastric incisura mucosa. Expressed in the deeper mucous glands of gastric antrum. Overexpressed in Helicobacter pylori infected gastric epithelium. Highly expressed in duodenal Brunner's glands, gall bladder, seminal vesicle, pancreatic centroacinar cells and ducts, and periductal glands of the common bile duct.

The protein localises to the secreted. Its function is as follows. May provide a mechanism for modulation of the composition of the protective mucus layer related to acid secretion or the presence of bacteria and noxious agents in the lumen. Plays an important role in the cytoprotection of epithelial surfaces and are used as tumor markers in a variety of cancers. May play a role in epithelial organogenesis. This is Mucin-6 (MUC6) from Homo sapiens (Human).